We begin with the raw amino-acid sequence, 207 residues long: Alpha-1-acid glycoprotein 1 (207 aa).

The N-terminal stretch at 1–18 (MALHMILVMLSLLPLLEA) is a signal peptide. Gln19 carries the post-translational modification Pyrrolidone carboxylic acid. Residues Asn25, Asn34, Asn76, Asn94, and Asn104 are each glycosylated (N-linked (GlcNAc...) asparagine). An intrachain disulfide couples Cys91 to Cys184.

This sequence belongs to the calycin superfamily. Lipocalin family. Expressed by the liver and secreted in plasma.

It is found in the secreted. Its function is as follows. Functions as a transport protein in the blood stream. Binds various ligands in the interior of its beta-barrel domain. Appears to function in modulating the activity of the immune system during the acute-phase reaction. The protein is Alpha-1-acid glycoprotein 1 (Orm1) of Mus caroli (Ryukyu mouse).